Here is a 375-residue protein sequence, read N- to C-terminus: Peptidyl-prolyl cis-trans isomerase D (375 aa).

Residues 7 to 169 (YFDITIANEP…QAVTISSAGV (163 aa)) enclose the PPIase cyclophilin-type domain. 3 TPR repeats span residues 217 to 250 (AGKL…LDVH), 270 to 307 (LPLL…PNLS), and 312 to 345 (GKAL…VPGD).

The protein belongs to the cyclophilin-type PPIase family. PPIase D subfamily.

Its subcellular location is the cytoplasm. The enzyme catalyses [protein]-peptidylproline (omega=180) = [protein]-peptidylproline (omega=0). PPIases accelerate the folding of proteins. It catalyzes the cis-trans isomerization of proline imidic peptide bonds in oligopeptides. The protein is Peptidyl-prolyl cis-trans isomerase D (CPR6) of Cryptococcus neoformans var. neoformans serotype D (strain JEC21 / ATCC MYA-565) (Filobasidiella neoformans).